We begin with the raw amino-acid sequence, 91 residues long: Sec-independent protein translocase protein TatAt (91 aa).

Residues 9 to 29 (FPGLPGGPELLVVLLIVVLLF) traverse the membrane as a helical segment. The interval 48-91 (FQRGREEIEDELQDMTGDDDEDDATSESSADSVSTDSVSTESSN) is disordered. The segment covering 54–72 (EIEDELQDMTGDDDEDDAT) has biased composition (acidic residues). The segment covering 73–91 (SESSADSVSTDSVSTESSN) has biased composition (low complexity).

The protein belongs to the TatA/E family. Forms a complex with TatC. Cytoplasmic and membrane-bound TatA form high-molecular-weight complexes.

It localises to the cell membrane. Its subcellular location is the cytoplasm. In terms of biological role, part of the twin-arginine translocation (Tat) system that transports large folded proteins containing a characteristic twin-arginine motif in their signal peptide across membranes. TatA could form the protein-conducting channel of the Tat system. The chain is Sec-independent protein translocase protein TatAt from Haloferax volcanii (strain ATCC 29605 / DSM 3757 / JCM 8879 / NBRC 14742 / NCIMB 2012 / VKM B-1768 / DS2) (Halobacterium volcanii).